The sequence spans 678 residues: Probable E3 ubiquitin ligase complex SCF subunit sconB (678 aa).

The tract at residues 1–52 (MSTEDNHDSQILTARHRSDASEQSFKSLFGGPSSEDGKETEPDTHDHNHSFS) is disordered. The segment covering 35–49 (EDGKETEPDTHDHNH) has biased composition (basic and acidic residues). One can recognise an F-box domain in the interval 178–224 (IDFITALPPEIAFKILCYLDTTSLCKASQVSRGWRALADDDVVWHRM). A disordered region spans residues 266–287 (VVGPRSPDASAESPPSGKRKLE). WD repeat units follow at residues 347–375 (GHTN…KIWD), 387–415 (GHES…KVWN), 427–455 (GHRG…KIWN), 466–496 (GHTD…RLWD), 508–543 (GHVG…TSGD), 553–595 (MGLE…RLWE), 607–635 (GHLE…KIWD), and 647–675 (GHSG…RMYS).

This sequence belongs to the WD repeat MET30/SCONB/SCON-2 family. Component of the SCF(sconB) E3 ubiquitin ligase complex.

The protein operates within protein modification; protein ubiquitination. In terms of biological role, component of the SCF(sconB) E3 ubiquitin ligase complex involved in the regulation of sulfur metabolite repression, probably by mediating the inactivation or degradation of the metR transcription factor. The chain is Probable E3 ubiquitin ligase complex SCF subunit sconB (sconB) from Emericella nidulans (strain FGSC A4 / ATCC 38163 / CBS 112.46 / NRRL 194 / M139) (Aspergillus nidulans).